The chain runs to 183 residues: Adenine phosphoribosyltransferase (183 aa).

The protein belongs to the purine/pyrimidine phosphoribosyltransferase family. In terms of assembly, homodimer.

Its subcellular location is the cytoplasm. The enzyme catalyses AMP + diphosphate = 5-phospho-alpha-D-ribose 1-diphosphate + adenine. It participates in purine metabolism; AMP biosynthesis via salvage pathway; AMP from adenine: step 1/1. Its function is as follows. Catalyzes a salvage reaction resulting in the formation of AMP, that is energically less costly than de novo synthesis. This Shewanella oneidensis (strain ATCC 700550 / JCM 31522 / CIP 106686 / LMG 19005 / NCIMB 14063 / MR-1) protein is Adenine phosphoribosyltransferase.